The sequence spans 268 residues: Aliphatic sulfonates import ATP-binding protein SsuB (268 aa).

Residues 15 to 236 enclose the ABC transporter domain; it reads LAVRNLQKTF…VRGSHRLAAL (222 aa). Position 47 to 54 (47 to 54) interacts with ATP; sequence GRSGCGKS.

Belongs to the ABC transporter superfamily. Aliphatic sulfonates importer (TC 3.A.1.17.2) family. In terms of assembly, the complex is composed of two ATP-binding proteins (SsuB), two transmembrane proteins (SsuC) and a solute-binding protein (SsuA).

The protein localises to the cell inner membrane. The enzyme catalyses ATP + H2O + aliphatic sulfonate-[sulfonate-binding protein]Side 1 = ADP + phosphate + aliphatic sulfonateSide 2 + [sulfonate-binding protein]Side 1.. Its function is as follows. Part of the ABC transporter complex SsuABC involved in aliphatic sulfonates import. Responsible for energy coupling to the transport system. This chain is Aliphatic sulfonates import ATP-binding protein SsuB, found in Pseudomonas fluorescens (strain Pf0-1).